Here is a 359-residue protein sequence, read N- to C-terminus: Opine dehydrogenase (359 aa).

It belongs to the lysopine/nopaline/octopine/opine/vitopine dehydrogenases family. Homodimer.

The catalysed reaction is (2S)-2-[(R)-1-carboxyethylamino]pentanoate + NAD(+) + H2O = L-2-aminopentanoate + pyruvate + NADH + H(+). Functionally, in the forward direction also acts on secondary amine dicarboxylates such as N-(1-carboxyethyl)methionine and N-(1-carboxyethyl)phenylalanine. In the reverse direction, the enzyme also acts on neutral amino acids as an amino donor. They include L-amino acids such as 2-aminopentanoic acid, 2-aminobutyric acid, 2-aminohexanoic acid, 3-chloroalanine, O-acetylserine, methionine, isoleucine, valine, phenylalanine, leucine and alanine. This is Opine dehydrogenase (odh) from Arthrobacter sp. (strain 1C).